The sequence spans 393 residues: NAD(P)H-quinone oxidoreductase subunit H, chloroplastic (393 aa).

This sequence belongs to the complex I 49 kDa subunit family. In terms of assembly, NDH is composed of at least 16 different subunits, 5 of which are encoded in the nucleus.

The protein resides in the plastid. It is found in the chloroplast thylakoid membrane. The enzyme catalyses a plastoquinone + NADH + (n+1) H(+)(in) = a plastoquinol + NAD(+) + n H(+)(out). It catalyses the reaction a plastoquinone + NADPH + (n+1) H(+)(in) = a plastoquinol + NADP(+) + n H(+)(out). In terms of biological role, NDH shuttles electrons from NAD(P)H:plastoquinone, via FMN and iron-sulfur (Fe-S) centers, to quinones in the photosynthetic chain and possibly in a chloroplast respiratory chain. The immediate electron acceptor for the enzyme in this species is believed to be plastoquinone. Couples the redox reaction to proton translocation, and thus conserves the redox energy in a proton gradient. The sequence is that of NAD(P)H-quinone oxidoreductase subunit H, chloroplastic from Nicotiana tomentosiformis (Tobacco).